We begin with the raw amino-acid sequence, 406 residues long: Kelch domain-containing protein 1 (406 aa).

Kelch repeat units follow at residues 24-76, 80-134, 135-181, 208-258, 260-307, and 311-361; these read FLYV…CGAC, KLYI…VYKD, RLIY…TKTQ, KGYI…PIAD, KLFL…ACLG, and EIMV…LESQ.

Component of a CRL5 E3 ubiquitin-protein ligase complex, also named ECS (Elongin BC-CUL2/5-SOCS-box protein) complex, composed of CUL5, Elongin BC (ELOB and ELOC), RBX1 and substrate-specific adapter KLHDC1. In terms of tissue distribution, widely expressed, with high levels in skeletal muscle, pancreas and liver. Undetectable in peripheral blood leukocytes.

The protein resides in the cytoplasm. Its subcellular location is the cytosol. It functions in the pathway protein modification; protein ubiquitination. In terms of biological role, substrate-recognition component of a Cul5-RING (CRL5) E3 ubiquitin-protein ligase complex of the DesCEND (destruction via C-end degrons) pathway, which recognizes a C-degron located at the extreme C terminus of target proteins, leading to their ubiquitination and degradation. The C-degron recognized by the DesCEND pathway is usually a motif of less than ten residues and can be present in full-length proteins, truncated proteins or proteolytically cleaved forms. The CRL5(KLHDC1) complex mediates ubiquitination and degradation of truncated SELENOS selenoprotein produced by failed UGA/Sec decoding, which ends with a glycine. This is Kelch domain-containing protein 1 from Homo sapiens (Human).